We begin with the raw amino-acid sequence, 354 residues long: MFLRTQMEQSQADIFALIKPHFGVMESSASYLPGFFMTFLLLQTTVLTQAMSLDIQINIQVPDTEGVLLECTSGSLIPPAEMTWRDSKGNIIPHSTTFDSQDRAGLLYLKSSILLKNRVQSPITCSIYNVTTNREKKRSVVLPDILFKSEYMSLMSNKFSCPLTYLFIIIFLNCLKGMLDFCCLKGKPVYFRELINKIKEVLNIKMRACCTLIWEFLLIVLYIAFLPFYLKFRSRASILDDAYPLHSNWLWDICIVLSVLMIFFTGLSLFLLWTLNCYGQMSYLPSMSMDLSKHDFEQNSSKSSEFQENYDVSCEIFLGTFEETIFSQHQESCIEDSFNPLQPLRLDCSLNWKT.

A signal peptide spans 1–52; sequence MFLRTQMEQSQADIFALIKPHFGVMESSASYLPGFFMTFLLLQTTVLTQAMS. In terms of domain architecture, Ig-like V-type spans 53 to 141; the sequence is LDIQINIQVP…TNREKKRSVV (89 aa). The Extracellular portion of the chain corresponds to 53 to 158; the sequence is LDIQINIQVP…SEYMSLMSNK (106 aa). Cysteine 71 and cysteine 125 are joined by a disulfide. A glycan (N-linked (GlcNAc...) asparagine) is linked at asparagine 129. The chain crosses the membrane as a helical span at residues 159–179; it reads FSCPLTYLFIIIFLNCLKGML. Topologically, residues 180 to 209 are cytoplasmic; it reads DFCCLKGKPVYFRELINKIKEVLNIKMRAC. A helical transmembrane segment spans residues 210-230; the sequence is CTLIWEFLLIVLYIAFLPFYL. The Extracellular segment spans residues 231-252; that stretch reads KFRSRASILDDAYPLHSNWLWD. Residues 253–273 traverse the membrane as a helical segment; that stretch reads ICIVLSVLMIFFTGLSLFLLW. The Cytoplasmic portion of the chain corresponds to 274 to 354; that stretch reads TLNCYGQMSY…RLDCSLNWKT (81 aa).

This sequence belongs to the SKINT family. In terms of tissue distribution, expressed in skin and thymus.

The protein resides in the membrane. In terms of biological role, may act by engaging a cell surface molecule on immature T-cells in the embryonic thymus. This chain is Selection and upkeep of intraepithelial T-cells protein 10 (Skint10), found in Mus musculus (Mouse).